A 565-amino-acid chain; its full sequence is MRLYPLVWLFLAACTAWGYPSSPPVVNTVKGKVLGKYVNLEGFAQPVAVFLGIPFAKPPLGSLRFAPPQPAEPWNFVKNTTSYPPMCSQDAVGGQVLSELFTNRKENIPLQFSEDCLYLNVYTPADLTKNSRLPVMVWIHGGGLVVGGASTYDGQVLSAHENVVVVTIQYRLGIWGFFSTGDEHSQGNWGHLDQVAALHWVQDNIANFGGNPGSVTIFGESAGGFSVSALVLSPLAKNLFHRAISESGVVLTSALITTDSKPIANLIATLSGCKTTTSAVMVHCLRQKTEDELLETSLKLNLFKLDLLGNPKESYPFLPTVIDGVVLPKTPEEILAEKSFNTVPYIVGINKQEFGWIIPTLMGYPLSEGKLDQKTAKSLLWKSYPTLKISEKMIPVVAEKYFGGTDDPAKRKDLFQDLVADVMFGVPSVMVSRSHRDAGAPTFMYEFEYRPSFVSAMRPKTVIGDHGDELFSVFGSPFLKDGASEEETNLSKMVMKYWANFARNGNPNGGGLPHWPEYDQKEGYLKIGASTQAAQRLKDKEVAFWSELRAKEAAEEPSHWKHVEL.

The N-terminal stretch at 1-18 (MRLYPLVWLFLAACTAWG) is a signal peptide. N-linked (GlcNAc...) asparagine glycosylation is present at Asn-79. The cysteines at positions 87 and 116 are disulfide-linked. Catalysis depends on Ser-221, which acts as the Acyl-ester intermediate. Cys-273 and Cys-284 are joined by a disulfide. Catalysis depends on Glu-353, which acts as the Charge relay system. At Lys-382 the chain carries N6-succinyllysine. The Charge relay system role is filled by His-466. Residue Asn-489 is glycosylated (N-linked (GlcNAc...) asparagine). A Prevents secretion from ER motif is present at residues 562–565 (HVEL).

The protein belongs to the type-B carboxylesterase/lipase family. Homotrimer. As to expression, detected in liver, lung and testis, but not in kidney (at protein level).

It localises to the endoplasmic reticulum lumen. The protein localises to the cytoplasm. The protein resides in the cytosol. Its subcellular location is the lipid droplet. It is found in the microsome. The catalysed reaction is all-trans-retinyl hexadecanoate + H2O = all-trans-retinol + hexadecanoate + H(+). It carries out the reaction a carboxylic ester + H2O = an alcohol + a carboxylate + H(+). The enzyme catalyses a long-chain fatty acyl ethyl ester + H2O = a long-chain fatty acid + ethanol + H(+). With respect to regulation, FAEE-synthesizing and PNPB-hydrolyzing activities are both inhibited by DFP. Major lipase in white adipose tissue. Involved in the metabolism of xenobiotics and of natural substrates. Hydrolyzes triacylglycerols and monoacylglycerols, with a preference for monoacylglycerols. The susceptibility of the substrate increases with decreasing acyl chain length of the fatty acid moiety. Catalyzes the synthesis of fatty acid ethyl esters. Hydrolyzes retinyl esters. The chain is Carboxylesterase 1D from Rattus norvegicus (Rat).